A 1127-amino-acid chain; its full sequence is MRIHQRSAPCVPVLLFLFLPSAPLCARGSKDWTPPQLGEVIESTEQDLAEFDAGLFRADRILDRHDLYRKTMHQLFSTLLEEPKNHAKHLQLIETLEKLAGPESKEIHEFLNRLRNSSTYAVYAARFFHLMERARILMARQEYLKAALLYRSGYELYYDEYLADPSSPGKKEVRARVEHAHAHVSRAKPLLEAVAAARAQYQNTQKRTYAASAHEAARARDAYSAAPAAPAAPGARAPSAAYPHSLTVEAELRILQDFSKTTEESAALTSLVQALGALLKFSRDIEHTGVVFEQLSTRAQKNNETQEAFLAVARKITLGRSKLEFEGILGALQAPAFDAFVDLFEAGRAHVAALHDQARAQFTFAHPPHSGRNIPAPTDTALASAGAWAAVGAGPAGSLIPGAPLSAGVGSRGAWGALPAPVEPLLRQADDALGALARLWAACAPLGAQHGRFPRDYETFGAQIVALSAHADALRATKHAYDFYHALLAFQRAPTVPVSAALRRQDLSQNEAFARDLSELAHHQEFLRRALAETESLSPPADTASTPSPGGAGDTPVPSQADKGGAKQSAAPDTAQKAVAQKAGASEEADASSSPSEMAVRAARAQLHAIQSELLRRFTALKRNRYTAHMAFHQHSGVSALAEYAQQLTSAEEALRFDAKDERRVRALSFVSETGPQQVSKDMEALDRLLSFFSGEEEFLSERGYAYGLQSLRDLRTQFEQFSARVQTLFLAAEQRAIHERLARQEAEYRYRQAVEGLGQDDFGGARKNLVLSREKADLALSLRYDTGYATETDTRLSTLDSSINRRENELVVKDVRAYIAQAKDKYYKGEVLDAERLLIRAKNRWAVTNVTENGEITNWLSVISTAVALKIGRVIPDFAPLYPQMSQLLHHAEQLYLHAAYLNASQRQEMERLLATSRENIHKVLLVYPLNERAGQLSLRIDQLLDPRSFRQQFAKKLDTIRGTYKTESKKAYSLLLDLYAIDARFSGIEKLKQEVEIYLGVRLPPPNPQAIAQSSNFTLAARRIFERRDAALYQVAIQQLDEALKLNPDNDAAAQLKDRIQSLTGDGAVNVLSSEDEKEYQRALQELQKGNKLVASAVVEQLLQKDRNKKSAKIQQLKKRIDAQL.

The first 26 residues, 1 to 26 (MRIHQRSAPCVPVLLFLFLPSAPLCA), serve as a signal peptide directing secretion. The interval 533–600 (ETESLSPPAD…ASSSPSEMAV (68 aa)) is disordered. Composition is skewed to low complexity over residues 536–549 (SLSP…TPSP) and 583–599 (AGAS…SEMA). Residues 1076-1126 (SEDEKEYQRALQELQKGNKLVASAVVEQLLQKDRNKKSAKIQQLKKRIDAQ) are a coiled coil.

This is an uncharacterized protein from Treponema pallidum (strain Nichols).